A 397-amino-acid polypeptide reads, in one-letter code: P2X purinoceptor 3 (397 aa).

Over 1 to 20 (MNCISDFFTYETTKSVVVKS) the chain is Cytoplasmic. A helical transmembrane segment spans residues 21–43 (WTIGIINRVVQLLIISYFVGWVF). Topologically, residues 44–322 (LHEKAYQVRD…AGKFNIIPTI (279 aa)) are extracellular. The ATP site is built by lysine 63 and lysine 65. 3 disulfide bridges follow: cysteine 107-cysteine 153, cysteine 116-cysteine 137, and cysteine 122-cysteine 147. Residue glutamate 111 coordinates Mg(2+). N-linked (GlcNAc...) asparagine glycosylation is present at asparagine 139. Aspartate 158 serves as a coordination point for Mg(2+). Ca(2+) is bound at residue aspartate 158. Residue asparagine 170 is glycosylated (N-linked (GlcNAc...) asparagine). An ATP-binding site is contributed by threonine 172. Asparagine 194 carries N-linked (GlcNAc...) asparagine glycosylation. Cystine bridges form between cysteine 203-cysteine 213 and cysteine 247-cysteine 256. Positions 275, 279, and 281 each coordinate ATP. The N-linked (GlcNAc...) asparagine glycan is linked to asparagine 290. Lysine 299 lines the ATP pocket. A helical transmembrane segment spans residues 323–341 (ISSVAAFTSVGVGTVLCDI). Topologically, residues 342-397 (ILLNFLKGADQYKAKKFEEVNETTLKIAALTNPVYPSDQTTAEKQSTDSGAFSIGH) are cytoplasmic. Residues 378 to 391 (SDQTTAEKQSTDSG) are compositionally biased toward polar residues. Residues 378 to 397 (SDQTTAEKQSTDSGAFSIGH) form a disordered region.

Belongs to the P2X receptor family. Homotrimer. Forms heterotrimer with P2RX2. Heterotrimeric P2RX2/3 has a ligand dose-response profile that is distinct from either homotrimeric P2RX2 or P2RX3.

The protein resides in the cell membrane. The enzyme catalyses Ca(2+)(in) = Ca(2+)(out). It carries out the reaction Na(+)(in) = Na(+)(out). Its activity is regulated as follows. Has high sensitivity to ATP. Fast activation by external ATP. Exhibits rapid desensitization. Sensitives to the ATP agonist:alpha/beta-methylene-ATP. Subject to allosteric inhibition by AF-219. Mg(2+) and Ca(2+) slow deactivation of P2RX3. In terms of biological role, extracellular ATP-activated non-selective cation channel. Plays particularly important role in sensory neurons where its activation is critical for gustatory, nociceptive responses, visceral reflexes and sensory hypersensitization. This chain is P2X purinoceptor 3 (P2RX3), found in Homo sapiens (Human).